Reading from the N-terminus, the 104-residue chain is Large ribosomal subunit protein uL24 (104 aa).

It belongs to the universal ribosomal protein uL24 family. Part of the 50S ribosomal subunit. In terms of processing, a methylated and unmethylated form are thought to exist.

Its function is as follows. One of two assembly initiator proteins, it binds directly to the 5'-end of the 23S rRNA, where it nucleates assembly of the 50S subunit. Functionally, one of the proteins that surrounds the polypeptide exit tunnel on the outside of the subunit. This is Large ribosomal subunit protein uL24 from Rhodopseudomonas palustris (strain ATCC BAA-98 / CGA009).